A 351-amino-acid polypeptide reads, in one-letter code: Ion-translocating oxidoreductase complex subunit D (351 aa).

Helical transmembrane passes span 18 to 38 (IMLL…YFFG), 40 to 60 (GSLI…GAVL), 87 to 107 (LPPL…IVIA), and 121 to 141 (PAMV…TSWL). The residue at position 185 (Thr185) is an FMN phosphoryl threonine. Transmembrane regions (helical) follow at residues 211 to 231 (VLAG…GLLL), 241 to 261 (IPVS…MIAP), 264 to 284 (FASP…FFIA), 298 to 318 (LIFG…GGYP), and 321 to 341 (VAFA…YTQP).

This sequence belongs to the NqrB/RnfD family. The complex is composed of six subunits: RnfA, RnfB, RnfC, RnfD, RnfE and RnfG. It depends on FMN as a cofactor.

It is found in the cell inner membrane. Part of a membrane-bound complex that couples electron transfer with translocation of ions across the membrane. The chain is Ion-translocating oxidoreductase complex subunit D from Yersinia pestis.